We begin with the raw amino-acid sequence, 398 residues long: Acetyl-CoA acetyltransferase erg10B, cytosolic (398 aa).

The active-site Acyl-thioester intermediate is the Cys-92. Residue Tyr-187 participates in K(+) binding. CoA-binding residues include Asn-229 and Lys-232. K(+) is bound by residues Ala-249, Pro-250, and Ser-252. Ser-253 provides a ligand contact to CoA. K(+) is bound at residue Val-350. Active-site proton acceptor residues include His-354 and Cys-384. Residue Asn-385 participates in chloride binding.

The protein belongs to the thiolase-like superfamily. Thiolase family. Homotetramer. K(+) serves as cofactor.

It localises to the cytoplasm. The protein localises to the cytosol. The catalysed reaction is 2 acetyl-CoA = acetoacetyl-CoA + CoA. It functions in the pathway metabolic intermediate biosynthesis; (R)-mevalonate biosynthesis; (R)-mevalonate from acetyl-CoA: step 1/3. Its activity is regulated as follows. Activity is increased by monovalent cations such as K(+), Rb(+) or Cs(+). Acetyl-CoA acetyltransferase; part of the first module of ergosterol biosynthesis pathway that includes the early steps of the pathway, conserved across all eukaryotes, and which results in the formation of mevalonate from acetyl-coenzyme A (acetyl-CoA). In this module, the cytosolic acetyl-CoA acetyltransferase erg10B catalyzes the formation of acetoacetyl-CoA. The hydroxymethylglutaryl-CoA synthases AFUA_8G07210 and AFUA_3G10660 then condense acetyl-CoA with acetoacetyl-CoA to form HMG-CoA. The rate-limiting step of the early module is the reduction to mevalonate by the 3-hydroxy-3-methylglutaryl-coenzyme A (HMG-CoA) reductases hmg1 and hmg2. Mevalonate is also a precursor for the extracellular siderophore triacetylfusarinine C (TAFC). The sequence is that of Acetyl-CoA acetyltransferase erg10B, cytosolic from Aspergillus fumigatus (strain CBS 144.89 / FGSC A1163 / CEA10) (Neosartorya fumigata).